The primary structure comprises 348 residues: Adenosine deaminase (348 aa).

His-16 and His-18 together coordinate Zn(2+). 3 residues coordinate substrate: His-18, Asp-20, and Gly-174. His-201 lines the Zn(2+) pocket. The active-site Proton donor is the Glu-204. Asp-282 contributes to the Zn(2+) binding site.

Belongs to the metallo-dependent hydrolases superfamily. Adenosine and AMP deaminases family. Adenosine deaminase subfamily. The cofactor is Zn(2+).

The enzyme catalyses adenosine + H2O + H(+) = inosine + NH4(+). The catalysed reaction is 2'-deoxyadenosine + H2O + H(+) = 2'-deoxyinosine + NH4(+). Functionally, catalyzes the hydrolytic deamination of adenosine and 2-deoxyadenosine. This Clostridium kluyveri (strain ATCC 8527 / DSM 555 / NBRC 12016 / NCIMB 10680 / K1) protein is Adenosine deaminase.